The following is a 118-amino-acid chain: MQPYKRAQRLKVLLKEEVAEIILHKIKDPRLGFITVTDVELSDDLRIAKVFISVLKTEDRQLTLQILNDAKGFVRSEIAKRLRIKIIPTFEFLFDESIDRGFRIDQLLKEIKKTSEEV.

It belongs to the RbfA family. In terms of assembly, monomer. Binds 30S ribosomal subunits, but not 50S ribosomal subunits or 70S ribosomes.

The protein localises to the cytoplasm. In terms of biological role, one of several proteins that assist in the late maturation steps of the functional core of the 30S ribosomal subunit. Associates with free 30S ribosomal subunits (but not with 30S subunits that are part of 70S ribosomes or polysomes). Required for efficient processing of 16S rRNA. May interact with the 5'-terminal helix region of 16S rRNA. The protein is Ribosome-binding factor A of Thermodesulfovibrio yellowstonii (strain ATCC 51303 / DSM 11347 / YP87).